The primary structure comprises 250 residues: Imidazole glycerol phosphate synthase subunit HisF (250 aa).

Residues aspartate 11 and aspartate 130 contribute to the active site.

Belongs to the HisA/HisF family. Heterodimer of HisH and HisF.

It localises to the cytoplasm. The catalysed reaction is 5-[(5-phospho-1-deoxy-D-ribulos-1-ylimino)methylamino]-1-(5-phospho-beta-D-ribosyl)imidazole-4-carboxamide + L-glutamine = D-erythro-1-(imidazol-4-yl)glycerol 3-phosphate + 5-amino-1-(5-phospho-beta-D-ribosyl)imidazole-4-carboxamide + L-glutamate + H(+). It functions in the pathway amino-acid biosynthesis; L-histidine biosynthesis; L-histidine from 5-phospho-alpha-D-ribose 1-diphosphate: step 5/9. Functionally, IGPS catalyzes the conversion of PRFAR and glutamine to IGP, AICAR and glutamate. The HisF subunit catalyzes the cyclization activity that produces IGP and AICAR from PRFAR using the ammonia provided by the HisH subunit. This is Imidazole glycerol phosphate synthase subunit HisF from Bacteroides fragilis (strain YCH46).